A 403-amino-acid polypeptide reads, in one-letter code: RNA-binding motif, single-stranded-interacting protein 1 (403 aa).

A disordered region spans residues 30–56; that stretch reads PAHPMAPPSPSTTSSNNNSSSSSNSGW. Residues 40 to 54 are compositionally biased toward low complexity; it reads STTSSNNNSSSSSNS. RRM domains lie at 62–135 and 141–226; these read TNLY…MAKQ and TNLY…FADG. Position 208 is a phosphothreonine (threonine 208).

It is found in the nucleus. Single-stranded DNA binding protein that interacts with the region upstream of the MYC gene. Binds specifically to the DNA sequence motif 5'-[AT]CT[AT][AT]T-3'. Probably has a role in DNA replication. In Rattus norvegicus (Rat), this protein is RNA-binding motif, single-stranded-interacting protein 1.